Consider the following 106-residue polypeptide: Putative membrane protein insertion efficiency factor (106 aa).

It belongs to the UPF0161 family.

It is found in the cell inner membrane. Functionally, could be involved in insertion of integral membrane proteins into the membrane. This Acinetobacter baumannii (strain AB307-0294) protein is Putative membrane protein insertion efficiency factor.